Reading from the N-terminus, the 334-residue chain is NAC domain-containing protein 66 (334 aa).

An NAC domain is found at 11 to 175 (VPPGFRFHPT…GWVVCRVFKK (165 aa)). Residues 111-181 (IGMRKTLVFY…VFKKNNLCKN (71 aa)) mediate DNA binding.

Mostly expressed in anthers. Also present in pollen, base of siliques and inflorescence stems.

The protein resides in the nucleus. Its function is as follows. Transcription activator of genes involved in biosynthesis of secondary walls. Together with NST1, required for the secondary cell wall thickening of the anther endocethium, which is necessary for anther dehiscence. May also regulate the secondary cell wall lignification of other tissues such as tracheary elements. The protein is NAC domain-containing protein 66 (NAC066) of Arabidopsis thaliana (Mouse-ear cress).